We begin with the raw amino-acid sequence, 490 residues long: Homoserine O-acetyltransferase (490 aa).

One can recognise an AB hydrolase-1 domain in the interval 47–353 (NAILVCHALT…SQFGHDAFLI (307 aa)). The active-site Nucleophile is Ser152. Substrate is bound at residue Arg221. Residues Asp315 and His348 contribute to the active site. Asp349 contacts substrate. CBS domains are found at residues 375–432 (MNTQ…YTSL) and 436–490 (MSSQ…GRGP).

The protein belongs to the AB hydrolase superfamily. MetX family. As to quaternary structure, homodimer.

It localises to the cytoplasm. It catalyses the reaction L-homoserine + acetyl-CoA = O-acetyl-L-homoserine + CoA. It participates in amino-acid biosynthesis; L-methionine biosynthesis via de novo pathway; O-acetyl-L-homoserine from L-homoserine: step 1/1. Its function is as follows. Transfers an acetyl group from acetyl-CoA to L-homoserine, forming acetyl-L-homoserine. This chain is Homoserine O-acetyltransferase, found in Methanosphaerula palustris (strain ATCC BAA-1556 / DSM 19958 / E1-9c).